Reading from the N-terminus, the 104-residue chain is L-rhamnose mutarotase (104 aa).

Substrate is bound at residue tyrosine 18. Histidine 22 acts as the Proton donor in catalysis. Residues tyrosine 41 and 76–77 each bind substrate; that span reads WW.

It belongs to the rhamnose mutarotase family. Homodimer.

Its subcellular location is the cytoplasm. The catalysed reaction is alpha-L-rhamnose = beta-L-rhamnose. The protein operates within carbohydrate metabolism; L-rhamnose metabolism. Functionally, involved in the anomeric conversion of L-rhamnose. The sequence is that of L-rhamnose mutarotase from Bacillus subtilis (strain 168).